A 239-amino-acid polypeptide reads, in one-letter code: Large ribosomal subunit protein uL3 (239 aa).

Disordered regions lie at residues 140–164 and 211–239; these read SHRSIGSTGGRQDPGKTWKNKKMPG and PLPKEAPKPGKFKVAGEQAAEAPAMQEGA. At Q151 the chain carries N5-methylglutamine.

The protein belongs to the universal ribosomal protein uL3 family. Part of the 50S ribosomal subunit. Forms a cluster with proteins L14 and L19. In terms of processing, methylated by PrmB.

Functionally, one of the primary rRNA binding proteins, it binds directly near the 3'-end of the 23S rRNA, where it nucleates assembly of the 50S subunit. The polypeptide is Large ribosomal subunit protein uL3 (Bradyrhizobium sp. (strain ORS 278)).